Reading from the N-terminus, the 417-residue chain is Serine hydroxymethyltransferase 1 (417 aa).

(6S)-5,6,7,8-tetrahydrofolate-binding positions include L121 and 125–127; that span reads GHL. K229 carries the N6-(pyridoxal phosphate)lysine modification. 355–357 contributes to the (6S)-5,6,7,8-tetrahydrofolate binding site; sequence SPF.

The protein belongs to the SHMT family. As to quaternary structure, homodimer. The cofactor is pyridoxal 5'-phosphate.

It localises to the cytoplasm. It carries out the reaction (6R)-5,10-methylene-5,6,7,8-tetrahydrofolate + glycine + H2O = (6S)-5,6,7,8-tetrahydrofolate + L-serine. Its pathway is one-carbon metabolism; tetrahydrofolate interconversion. It participates in amino-acid biosynthesis; glycine biosynthesis; glycine from L-serine: step 1/1. Its function is as follows. Catalyzes the reversible interconversion of serine and glycine with tetrahydrofolate (THF) serving as the one-carbon carrier. This reaction serves as the major source of one-carbon groups required for the biosynthesis of purines, thymidylate, methionine, and other important biomolecules. Also exhibits THF-independent aldolase activity toward beta-hydroxyamino acids, producing glycine and aldehydes, via a retro-aldol mechanism. This Pectobacterium atrosepticum (strain SCRI 1043 / ATCC BAA-672) (Erwinia carotovora subsp. atroseptica) protein is Serine hydroxymethyltransferase 1.